The chain runs to 227 residues: Large ribosomal subunit protein uL10c (227 aa).

The transit peptide at 1–47 (MEATFFTLPSSTSHSYPFSLKSHFNNSLTLPTHPHFKPKSKNLTIRS) directs the protein to the chloroplast.

Belongs to the universal ribosomal protein uL10 family. As to quaternary structure, part of the 50S ribosomal subunit.

It is found in the plastid. It localises to the chloroplast. In terms of biological role, this protein binds directly to 23S ribosomal RNA. In Nicotiana tabacum (Common tobacco), this protein is Large ribosomal subunit protein uL10c (RPL10).